We begin with the raw amino-acid sequence, 163 residues long: Nucleotide-binding protein GWCH70_0711 (163 aa).

The protein belongs to the YajQ family.

Nucleotide-binding protein. This is Nucleotide-binding protein GWCH70_0711 from Geobacillus sp. (strain WCH70).